We begin with the raw amino-acid sequence, 182 residues long: Protein GrpE (182 aa).

Positions 1 to 35 (MTQENQTPPPEQENLAADPAVETTAETPAVKTPEQ) are disordered.

The protein belongs to the GrpE family. As to quaternary structure, homodimer.

It is found in the cytoplasm. Its function is as follows. Participates actively in the response to hyperosmotic and heat shock by preventing the aggregation of stress-denatured proteins, in association with DnaK and GrpE. It is the nucleotide exchange factor for DnaK and may function as a thermosensor. Unfolded proteins bind initially to DnaJ; upon interaction with the DnaJ-bound protein, DnaK hydrolyzes its bound ATP, resulting in the formation of a stable complex. GrpE releases ADP from DnaK; ATP binding to DnaK triggers the release of the substrate protein, thus completing the reaction cycle. Several rounds of ATP-dependent interactions between DnaJ, DnaK and GrpE are required for fully efficient folding. This Polynucleobacter necessarius subsp. necessarius (strain STIR1) protein is Protein GrpE.